Reading from the N-terminus, the 1663-residue chain is Kotanin synthase (1663 aa).

Residues 19 to 168 (RPHEFSFNTQ…PLPVYGGPCH (150 aa)) form an N-terminal acylcarrier protein transacylase domain (SAT) region. The 431-residue stretch at 301-731 (DSRIAVVGMS…GGNTSLLLEE (431 aa)) folds into the Ketosynthase family 3 (KS3) domain. Active-site for beta-ketoacyl synthase activity residues include cysteine 474, histidine 609, and histidine 650. Residues 830–1149 (FIFSGQGSFY…SMCTLQETGV (320 aa)) form a malonyl-CoA:ACP transacylase (MAT) domain region. The interval 1209 to 1527 (TALVHQIMEE…PRILMNRFFD (319 aa)) is product template (PT) domain. Positions 1213-1349 (HQIMEESFRP…GVVRCGDRQS (137 aa)) are N-terminal hotdog fold. The 311-residue stretch at 1213–1523 (HQIMEESFRP…LRPLPRILMN (311 aa)) folds into the PKS/mFAS DH domain. Residue histidine 1245 is the Proton acceptor; for dehydratase activity of the active site. The C-terminal hotdog fold stretch occupies residues 1376-1523 (QASRVSRDLV…LRPLPRILMN (148 aa)). Aspartate 1434 acts as the Proton donor; for dehydratase activity in catalysis. The interval 1544–1580 (DLPQVQHQPSPTTDSGPDDDPKDPNTGPLTPEVDLPV) is disordered. The region spanning 1586 to 1663 (KANTKLVRGA…ELKEYLTASW (78 aa)) is the Carrier domain. Serine 1623 carries the O-(pantetheine 4'-phosphoryl)serine modification.

The cofactor is pantetheine 4'-phosphate.

It participates in secondary metabolite biosynthesis. Functionally, non-reducing polyketide synthase; part of the gene cluster that mediates the biosynthesis of the bicoumarin kotanin. The non-reducing polyketide synthase ktnS first catalyzes the formation of the pentaketidic 4,7-dihydroxy-5-methylcoumarin from acetyl coenzyme A and 4 malonyl coenzyme A molecules. Further O-methylation by ktnB leads to the formation of 7-demethylsiderin. Then, an oxidative phenol coupling catalyzed by the cytochrome P450 monooxygenase ktnC forms the 8,8'-dimer P-orlandin via dimerization the monomeric precursor, 7-demethylsiderin. P-orlandin is subsequently O-methylated in a stepwise fashion to demethylkotanin and kotanin. This Aspergillus niger (strain ATCC MYA-4892 / CBS 513.88 / FGSC A1513) protein is Kotanin synthase.